Reading from the N-terminus, the 274-residue chain is Diaminopimelate epimerase (274 aa).

The substrate site is built by Asn11, Gln44, and Asn64. Cys73 functions as the Proton donor in the catalytic mechanism. Substrate-binding positions include 74–75, Asn157, Asn190, and 208–209; these read GN and ER. The active-site Proton acceptor is the Cys217. 218 to 219 is a binding site for substrate; that stretch reads GS.

Belongs to the diaminopimelate epimerase family. As to quaternary structure, homodimer.

It localises to the cytoplasm. It catalyses the reaction (2S,6S)-2,6-diaminopimelate = meso-2,6-diaminopimelate. It participates in amino-acid biosynthesis; L-lysine biosynthesis via DAP pathway; DL-2,6-diaminopimelate from LL-2,6-diaminopimelate: step 1/1. Catalyzes the stereoinversion of LL-2,6-diaminopimelate (L,L-DAP) to meso-diaminopimelate (meso-DAP), a precursor of L-lysine and an essential component of the bacterial peptidoglycan. This is Diaminopimelate epimerase from Actinobacillus pleuropneumoniae serotype 3 (strain JL03).